The primary structure comprises 653 residues: NADH-quinone oxidoreductase subunit L (653 aa).

Transmembrane regions (helical) follow at residues 8-28 (IMII…LNRI), 35-55 (IIAI…FCDA), 89-109 (IMFI…LGYM), 115-135 (IIRF…LVSA), 138-158 (FLQL…LIGF), 178-198 (VSDF…GSAN), 214-234 (ILVH…GCIG), 253-273 (TPVS…FLVA), 285-305 (VLQF…SIAI), 313-333 (IIAY…GVSS), 336-356 (SAIF…LSAG), 377-397 (MPIT…IYPL), 418-438 (FIFG…IIIL), 465-485 (LILL…LLSM), 511-531 (LYIK…GICL), 577-597 (EIYN…FYLG), and 629-649 (IFNY…YFVW).

It belongs to the complex I subunit 5 family.

It localises to the cell membrane. It carries out the reaction a quinone + NADH + 5 H(+)(in) = a quinol + NAD(+) + 4 H(+)(out). In terms of biological role, NDH-1 shuttles electrons from NADH, via FMN and iron-sulfur (Fe-S) centers, to quinones in the respiratory chain. Couples the redox reaction to proton translocation (for every two electrons transferred, four hydrogen ions are translocated across the cytoplasmic membrane), and thus conserves the redox energy in a proton gradient. In Rickettsia typhi (strain ATCC VR-144 / Wilmington), this protein is NADH-quinone oxidoreductase subunit L (nuoL).